Consider the following 447-residue polypeptide: Rab GDP dissociation inhibitor alpha (447 aa).

At S427 the chain carries Phosphoserine.

Belongs to the Rab GDI family. As to quaternary structure, interacts with RHOH. Interacts with the non-phosphorylated forms of RAB1A, RAB3A, RAB5A, RAB5B, RAB5C, RAB8A, RAB8B, RAB10, RAB12, RAB35, and RAB43.

The protein resides in the cytoplasm. It localises to the golgi apparatus. The protein localises to the trans-Golgi network. Its function is as follows. Regulates the GDP/GTP exchange reaction of most Rab proteins by inhibiting the dissociation of GDP from them, and the subsequent binding of GTP to them. Promotes the dissociation of GDP-bound Rab proteins from the membrane and inhibits their activation. Promotes the dissociation of RAB1A, RAB3A, RAB5A and RAB10 from membranes. In Canis lupus familiaris (Dog), this protein is Rab GDP dissociation inhibitor alpha (GDI1).